The sequence spans 217 residues: Probable transaldolase (217 aa).

Catalysis depends on Lys83, which acts as the Schiff-base intermediate with substrate.

The protein belongs to the transaldolase family. Type 3B subfamily.

Its subcellular location is the cytoplasm. It carries out the reaction D-sedoheptulose 7-phosphate + D-glyceraldehyde 3-phosphate = D-erythrose 4-phosphate + beta-D-fructose 6-phosphate. It participates in carbohydrate degradation; pentose phosphate pathway; D-glyceraldehyde 3-phosphate and beta-D-fructose 6-phosphate from D-ribose 5-phosphate and D-xylulose 5-phosphate (non-oxidative stage): step 2/3. In terms of biological role, transaldolase is important for the balance of metabolites in the pentose-phosphate pathway. The protein is Probable transaldolase (tal) of Methanocaldococcus jannaschii (strain ATCC 43067 / DSM 2661 / JAL-1 / JCM 10045 / NBRC 100440) (Methanococcus jannaschii).